A 486-amino-acid chain; its full sequence is Betaine aldehyde dehydrogenase (486 aa).

Positions 23 and 90 each coordinate K(+). 147-149 (GAW) is a binding site for NAD(+). Lys-159 (charge relay system) is an active-site residue. NAD(+)-binding positions include 173-176 (KPSE) and 226-229 (ESGT). Leu-241 contacts K(+). Residue Glu-247 is the Proton acceptor of the active site. NAD(+) contacts are provided by Gly-249, Cys-281, and Glu-382. Residue Cys-281 is the Nucleophile of the active site. Cys-281 bears the Cysteine sulfenic acid (-SOH) mark. The K(+) site is built by Lys-452 and Gly-455. Glu-459 functions as the Charge relay system in the catalytic mechanism.

This sequence belongs to the aldehyde dehydrogenase family. In terms of assembly, dimer of dimers. The cofactor is K(+).

It carries out the reaction betaine aldehyde + NAD(+) + H2O = glycine betaine + NADH + 2 H(+). Its pathway is amine and polyamine biosynthesis; betaine biosynthesis via choline pathway; betaine from betaine aldehyde: step 1/1. Involved in the biosynthesis of the osmoprotectant glycine betaine. Catalyzes the irreversible oxidation of betaine aldehyde to the corresponding acid. In Vibrio vulnificus (strain CMCP6), this protein is Betaine aldehyde dehydrogenase.